We begin with the raw amino-acid sequence, 114 residues long: MVNIMDEIIVVTTPTIPGYKIIEVKGIARGGIVMATHLGRDILALLRNIKGGEVKEYTQMMAEAREEALRRMIEHAKKLGANAVVNFRFATSNVGGGMAEVYAYGTAVVVEREK.

This sequence belongs to the UPF0145 family.

The sequence is that of UPF0145 protein PF1756 from Pyrococcus furiosus (strain ATCC 43587 / DSM 3638 / JCM 8422 / Vc1).